Reading from the N-terminus, the 399-residue chain is MVKEKVILAYSGGLDTSVAITWLNKDYDVIAVCMDVGEGNDLDFIHDKALKVGAIESHVIDVKDEFAEDYVLVALQGHTFYEQKYPLVSALSRPLISKKLVEIAHKTGATTIAHGCTGKGNDQVRFEVAIASLDPSLKVIAPVREWKWSREEEINYAKANGVPIPADLDSPYSVDQNLWGRANECGVLENPWNEAPEDAYDLTVAPEAAPDSPVYVNIDFEAGVPVALDGKKMKLADLILELNDLAGQHGVGRIDHVENRLVGIKSREIYECPGAVTLLAAHKEIEDLTLVRELAHFKPIIENELSNLIYNGLWFNPATEALIAYLKSTQQVVNGTAKVKLYKGSATVVARKSDNSLYDESLATYTSADTFDQDAAIGFIKLWGLPSKVHAEVQAHKDK.

9-17 is an ATP binding site; sequence AYSGGLDTS. Residue Y85 coordinates L-citrulline. Position 115 (G115) interacts with ATP. L-aspartate-binding residues include T117, N121, and D122. N121 provides a ligand contact to L-citrulline. R125, S173, E258, and Y270 together coordinate L-citrulline.

The protein belongs to the argininosuccinate synthase family. Type 1 subfamily. As to quaternary structure, homotetramer.

The protein localises to the cytoplasm. The catalysed reaction is L-citrulline + L-aspartate + ATP = 2-(N(omega)-L-arginino)succinate + AMP + diphosphate + H(+). The protein operates within amino-acid biosynthesis; L-arginine biosynthesis; L-arginine from L-ornithine and carbamoyl phosphate: step 2/3. The sequence is that of Argininosuccinate synthase from Streptococcus gordonii (strain Challis / ATCC 35105 / BCRC 15272 / CH1 / DL1 / V288).